Here is a 229-residue protein sequence, read N- to C-terminus: Large ribosomal subunit protein uL1 (229 aa).

Belongs to the universal ribosomal protein uL1 family. Part of the 50S ribosomal subunit.

Its function is as follows. Binds directly to 23S rRNA. The L1 stalk is quite mobile in the ribosome, and is involved in E site tRNA release. Protein L1 is also a translational repressor protein, it controls the translation of the L11 operon by binding to its mRNA. This chain is Large ribosomal subunit protein uL1, found in Streptococcus thermophilus (strain CNRZ 1066).